The chain runs to 485 residues: Catalase isozyme 1 (485 aa).

Residues His-58 and Asn-131 contribute to the active site. Tyr-341 lines the heme pocket.

Belongs to the catalase family. Homotetramer. Requires heme as cofactor.

Its subcellular location is the peroxisome. It catalyses the reaction 2 H2O2 = O2 + 2 H2O. Occurs in almost all aerobically respiring organisms and serves to protect cells from the toxic effects of hydrogen peroxide. The chain is Catalase isozyme 1 (CAT1) from Nicotiana plumbaginifolia (Leadwort-leaved tobacco).